We begin with the raw amino-acid sequence, 407 residues long: Phosphopentomutase (407 aa).

Mn(2+)-binding residues include D10, D306, H311, D347, H348, and H359.

The protein belongs to the phosphopentomutase family. Mn(2+) is required as a cofactor.

The protein localises to the cytoplasm. It catalyses the reaction 2-deoxy-alpha-D-ribose 1-phosphate = 2-deoxy-D-ribose 5-phosphate. It carries out the reaction alpha-D-ribose 1-phosphate = D-ribose 5-phosphate. The protein operates within carbohydrate degradation; 2-deoxy-D-ribose 1-phosphate degradation; D-glyceraldehyde 3-phosphate and acetaldehyde from 2-deoxy-alpha-D-ribose 1-phosphate: step 1/2. In terms of biological role, isomerase that catalyzes the conversion of deoxy-ribose 1-phosphate (dRib-1-P) and ribose 1-phosphate (Rib-1-P) to deoxy-ribose 5-phosphate (dRib-5-P) and ribose 5-phosphate (Rib-5-P), respectively. This is Phosphopentomutase from Pectobacterium carotovorum subsp. carotovorum (strain PC1).